Consider the following 102-residue polypeptide: Large ribosomal subunit protein bL21 (102 aa).

It belongs to the bacterial ribosomal protein bL21 family. In terms of assembly, part of the 50S ribosomal subunit. Contacts protein L20.

Functionally, this protein binds to 23S rRNA in the presence of protein L20. This is Large ribosomal subunit protein bL21 from Nocardioides sp. (strain ATCC BAA-499 / JS614).